The primary structure comprises 122 residues: Large ribosomal subunit protein uL14 (122 aa).

The protein belongs to the universal ribosomal protein uL14 family. Part of the 50S ribosomal subunit. Forms a cluster with proteins L3 and L19. In the 70S ribosome, L14 and L19 interact and together make contacts with the 16S rRNA in bridges B5 and B8.

Binds to 23S rRNA. Forms part of two intersubunit bridges in the 70S ribosome. In Shewanella amazonensis (strain ATCC BAA-1098 / SB2B), this protein is Large ribosomal subunit protein uL14.